Here is a 417-residue protein sequence, read N- to C-terminus: NADH-quinone oxidoreductase subunit D (417 aa).

This sequence belongs to the complex I 49 kDa subunit family. NDH-1 is composed of 14 different subunits. Subunits NuoB, C, D, E, F, and G constitute the peripheral sector of the complex.

It localises to the cell inner membrane. The enzyme catalyses a quinone + NADH + 5 H(+)(in) = a quinol + NAD(+) + 4 H(+)(out). NDH-1 shuttles electrons from NADH, via FMN and iron-sulfur (Fe-S) centers, to quinones in the respiratory chain. The immediate electron acceptor for the enzyme in this species is believed to be ubiquinone. Couples the redox reaction to proton translocation (for every two electrons transferred, four hydrogen ions are translocated across the cytoplasmic membrane), and thus conserves the redox energy in a proton gradient. The sequence is that of NADH-quinone oxidoreductase subunit D from Francisella philomiragia subsp. philomiragia (strain ATCC 25017 / CCUG 19701 / FSC 153 / O#319-036).